We begin with the raw amino-acid sequence, 118 residues long: Large ribosomal subunit protein bL19 (118 aa).

It belongs to the bacterial ribosomal protein bL19 family.

This protein is located at the 30S-50S ribosomal subunit interface and may play a role in the structure and function of the aminoacyl-tRNA binding site. In Campylobacter curvus (strain 525.92), this protein is Large ribosomal subunit protein bL19.